A 205-amino-acid chain; its full sequence is Dephospho-CoA kinase (205 aa).

The DPCK domain occupies 3–204; sequence KVGLTGGIGA…HRAHQPGESQ (202 aa). Residue 11–16 participates in ATP binding; sequence GAGKSE.

The protein belongs to the CoaE family.

It is found in the cytoplasm. It carries out the reaction 3'-dephospho-CoA + ATP = ADP + CoA + H(+). The protein operates within cofactor biosynthesis; coenzyme A biosynthesis; CoA from (R)-pantothenate: step 5/5. Catalyzes the phosphorylation of the 3'-hydroxyl group of dephosphocoenzyme A to form coenzyme A. This chain is Dephospho-CoA kinase, found in Streptomyces avermitilis (strain ATCC 31267 / DSM 46492 / JCM 5070 / NBRC 14893 / NCIMB 12804 / NRRL 8165 / MA-4680).